Here is a 338-residue protein sequence, read N- to C-terminus: Nicotinate-nucleotide--dimethylbenzimidazole phosphoribosyltransferase (338 aa).

The active-site Proton acceptor is E305.

This sequence belongs to the CobT family.

The catalysed reaction is 5,6-dimethylbenzimidazole + nicotinate beta-D-ribonucleotide = alpha-ribazole 5'-phosphate + nicotinate + H(+). It functions in the pathway nucleoside biosynthesis; alpha-ribazole biosynthesis; alpha-ribazole from 5,6-dimethylbenzimidazole: step 1/2. In terms of biological role, catalyzes the synthesis of alpha-ribazole-5'-phosphate from nicotinate mononucleotide (NAMN) and 5,6-dimethylbenzimidazole (DMB). In Sinorhizobium medicae (strain WSM419) (Ensifer medicae), this protein is Nicotinate-nucleotide--dimethylbenzimidazole phosphoribosyltransferase.